Here is a 92-residue protein sequence, read N- to C-terminus: Small ribosomal subunit protein uS19 (92 aa).

It belongs to the universal ribosomal protein uS19 family.

Protein S19 forms a complex with S13 that binds strongly to the 16S ribosomal RNA. This Pelobacter propionicus (strain DSM 2379 / NBRC 103807 / OttBd1) protein is Small ribosomal subunit protein uS19.